The following is a 355-amino-acid chain: UDP-N-acetylglucosamine--N-acetylmuramyl-(pentapeptide) pyrophosphoryl-undecaprenol N-acetylglucosamine transferase (355 aa).

Residues 15–17 (TGG), asparagine 127, arginine 163, serine 191, isoleucine 244, 263–268 (ALTVSE), and glutamine 288 contribute to the UDP-N-acetyl-alpha-D-glucosamine site.

Belongs to the glycosyltransferase 28 family. MurG subfamily.

It localises to the cell inner membrane. It catalyses the reaction di-trans,octa-cis-undecaprenyl diphospho-N-acetyl-alpha-D-muramoyl-L-alanyl-D-glutamyl-meso-2,6-diaminopimeloyl-D-alanyl-D-alanine + UDP-N-acetyl-alpha-D-glucosamine = di-trans,octa-cis-undecaprenyl diphospho-[N-acetyl-alpha-D-glucosaminyl-(1-&gt;4)]-N-acetyl-alpha-D-muramoyl-L-alanyl-D-glutamyl-meso-2,6-diaminopimeloyl-D-alanyl-D-alanine + UDP + H(+). Its pathway is cell wall biogenesis; peptidoglycan biosynthesis. Cell wall formation. Catalyzes the transfer of a GlcNAc subunit on undecaprenyl-pyrophosphoryl-MurNAc-pentapeptide (lipid intermediate I) to form undecaprenyl-pyrophosphoryl-MurNAc-(pentapeptide)GlcNAc (lipid intermediate II). The protein is UDP-N-acetylglucosamine--N-acetylmuramyl-(pentapeptide) pyrophosphoryl-undecaprenol N-acetylglucosamine transferase of Salmonella newport (strain SL254).